A 124-amino-acid polypeptide reads, in one-letter code: Urease subunit beta (124 aa).

The protein belongs to the urease beta subunit family. As to quaternary structure, heterotrimer of UreA (gamma), UreB (beta) and UreC (alpha) subunits. Three heterotrimers associate to form the active enzyme.

Its subcellular location is the cytoplasm. The catalysed reaction is urea + 2 H2O + H(+) = hydrogencarbonate + 2 NH4(+). The protein operates within nitrogen metabolism; urea degradation; CO(2) and NH(3) from urea (urease route): step 1/1. In Ureaplasma parvum serovar 3 (strain ATCC 27815 / 27 / NCTC 11736), this protein is Urease subunit beta.